Consider the following 264-residue polypeptide: Movement protein (264 aa).

Residues 211–264 are disordered; that stretch reads RTKSSKRGPKNNNNLGKGRSGGRPKPKSFDEVEKEFDNLIEDEAETSVADSDSY. A compositionally biased stretch (basic and acidic residues) spans 237–247; the sequence is KSFDEVEKEFD.

It belongs to the tobamovirus movement protein family. Binds to host RBCS at the plasmodesmata; this interaction seems required for viral systemic movement. In resistant plants, interacts with host MBP2C at host microtubules; this interaction prevents virus cell to cell movement. In resistant plants, interacts with host resistance (R) protein (e.g. tomato ToMV resistance protein TM-2(2), AC Q71BG9) at the host plasma membrane; this interaction triggers host defense responses leading to programmed cell death.

The protein localises to the host cytoplasm. Its subcellular location is the host cytoskeleton. The protein resides in the host cell junction. It is found in the host plasmodesma. Transports viral genome to neighboring plant cells directly through plasmosdesmata, without any budding. The movement protein allows efficient cell to cell propagation, by bypassing the host cell wall barrier. Forms a ribonucleoprotein complex with viral RNA. Binds microtubules and modulates microtubule stability. Can bind double-stranded DNA. Triggers host hypersensitive defense reaction in incompatible plants harboring resistance (R) proteins. This is Movement protein (MP) from Tomato mosaic virus (strain S-1) (ToMV).